We begin with the raw amino-acid sequence, 285 residues long: 1-deoxypentalenic acid 11-beta-hydroxylase (285 aa).

Arg117 is a substrate binding site. His137 and Asp139 together coordinate Fe cation. 2-oxoglutarate is bound by residues 137 to 139 (HQD) and Trp153. Arg188 provides a ligand contact to substrate. His226 is a Fe cation binding site. 2-oxoglutarate contacts are provided by Ser228 and Arg240.

The protein belongs to the PhyH family. The cofactor is Fe cation. L-ascorbate is required as a cofactor.

It carries out the reaction 1-deoxypentalenate + 2-oxoglutarate + O2 = 1-deoxy-11beta-hydroxypentalenate + succinate + CO2. It participates in antibiotic biosynthesis; neopentalenolactone biosynthesis. In terms of biological role, catalyzes the conversion of 1-deoxypentalenic acid to 11-beta-hydroxy-1-deoxypentalenic acid in the biosynthesis of neopentalenolactone antibiotic. This chain is 1-deoxypentalenic acid 11-beta-hydroxylase (ptlH), found in Streptomyces avermitilis (strain ATCC 31267 / DSM 46492 / JCM 5070 / NBRC 14893 / NCIMB 12804 / NRRL 8165 / MA-4680).